Consider the following 267-residue polypeptide: Serine/arginine-rich splicing factor 1 (267 aa).

The region spanning 16 to 91 (CRIYVGNLPP…YRLRVEFPRS (76 aa)) is the RRM 1 domain. 2 disordered regions span residues 90–137 (RSGR…PSRR) and 212–267 (KVDG…RSRT). Residues 93–127 (RGAGGRGGGGGGGGGGGGGGGGGGGGGGGGGGGAP) are compositionally biased toward gly residues. The RRM 2 domain occupies 140 to 214 (YRVVVSGLPP…ETAYIRVKVD (75 aa)). Over residues 224 to 267 (SRSRSRSRSRSRSRSNSRSRSYSPRRSRGSPRYSPRHSRSRSRT) the composition is skewed to basic residues.

It belongs to the splicing factor SR family.

Its subcellular location is the cytoplasm. It is found in the nucleus speckle. In terms of biological role, may play a role in preventing exon skipping, ensuring the accuracy of splicing and regulating alternative splicing. The chain is Serine/arginine-rich splicing factor 1 (srsf1) from Xenopus tropicalis (Western clawed frog).